Reading from the N-terminus, the 243-residue chain is Pyridoxine 5'-phosphate synthase (243 aa).

Residue asparagine 9 participates in 3-amino-2-oxopropyl phosphate binding. A 1-deoxy-D-xylulose 5-phosphate-binding site is contributed by 11 to 12 (DH). Arginine 20 is a 3-amino-2-oxopropyl phosphate binding site. Histidine 45 functions as the Proton acceptor in the catalytic mechanism. Residues arginine 47 and histidine 52 each contribute to the 1-deoxy-D-xylulose 5-phosphate site. The active-site Proton acceptor is the glutamate 72. Threonine 102 provides a ligand contact to 1-deoxy-D-xylulose 5-phosphate. The active-site Proton donor is the histidine 193. 3-amino-2-oxopropyl phosphate contacts are provided by residues glycine 194 and 215–216 (GH).

The protein belongs to the PNP synthase family. In terms of assembly, homooctamer; tetramer of dimers.

The protein resides in the cytoplasm. The catalysed reaction is 3-amino-2-oxopropyl phosphate + 1-deoxy-D-xylulose 5-phosphate = pyridoxine 5'-phosphate + phosphate + 2 H2O + H(+). The protein operates within cofactor biosynthesis; pyridoxine 5'-phosphate biosynthesis; pyridoxine 5'-phosphate from D-erythrose 4-phosphate: step 5/5. Catalyzes the complicated ring closure reaction between the two acyclic compounds 1-deoxy-D-xylulose-5-phosphate (DXP) and 3-amino-2-oxopropyl phosphate (1-amino-acetone-3-phosphate or AAP) to form pyridoxine 5'-phosphate (PNP) and inorganic phosphate. This Yersinia pseudotuberculosis serotype I (strain IP32953) protein is Pyridoxine 5'-phosphate synthase.